The sequence spans 201 residues: MTDISAVAGQPALVRNELNLVWLDMEMTGLDPDTDRIIEIAVVVTNSTLDIAVEGPVLAIHQSDETLAKMDDWNKNTHGRSGLIDRVRASSVTEADAAAQIAAFLARHVPPGKSPMCGNSICQDRRFMARWMPELERFFHYRNLDVSTLKELCRRWQPAIYKGFQKRAMHTALADIHESIDELKYYRERFLIPAAPAGETA.

An Exonuclease domain is found at 20-183; that stretch reads LVWLDMEMTG…ADIHESIDEL (164 aa). Y141 is a catalytic residue.

It belongs to the oligoribonuclease family.

It localises to the cytoplasm. Functionally, 3'-to-5' exoribonuclease specific for small oligoribonucleotides. In Burkholderia pseudomallei (strain 1106a), this protein is Oligoribonuclease.